The primary structure comprises 21 residues: SIKDKICKIIQAQCGKKLPFT.

Cys7 and Cys14 form a disulfide bridge. At Thr21 the chain carries Threonine amide.

Belongs to the sylv/frat/paul family. Post-translationally, occurs in oxidized and reduced states which are thought to adopt a compact globular and linear structure, respectively.

Induces transient hyperalgesia and paw edema in mice. Probably exerts its effects via different pathways in an oxidation state-dependent way. This is Paulistine from Polybia paulista (Neotropical social wasp).